The primary structure comprises 78 residues: Short neurotoxin OH-5 (78 aa).

An N-terminal signal peptide occupies residues M1 to T21. Cystine bridges form between C24–C40, C33–C58, C62–C70, and C71–C76.

This sequence belongs to the three-finger toxin family. Short-chain subfamily. In terms of tissue distribution, expressed by the venom gland.

It is found in the secreted. In terms of biological role, this three-finger toxin binds and inhibits the nicotinic acetylcholine receptor (nAChR). The chain is Short neurotoxin OH-5 from Ophiophagus hannah (King cobra).